We begin with the raw amino-acid sequence, 1580 residues long: Transcriptional activator GLI3 (1580 aa).

An N-acetylmethionine modification is found at M1. Composition is skewed to polar residues over residues 1–10 (MEAQSHSSTT) and 58–78 (ITMQPQNVQGLSKVSEEPSTS). Positions 1 to 79 (MEAQSHSSTT…KVSEEPSTSS (79 aa)) are disordered. R175 carries the post-translational modification Omega-N-methylarginine. A disordered region spans residues 368–475 (QSLGSAFGHS…DKDESKQEPE (108 aa)). Residues 401–427 (NPVQVSSGPSESSQNKPTSESAVSSTG) are compositionally biased toward polar residues. Residues K438 and K462 each participate in a glycyl lysine isopeptide (Lys-Gly) (interchain with G-Cter in SUMO2) cross-link. The segment covering 461-474 (VKEEGDKDESKQEP) has biased composition (basic and acidic residues). C2H2-type zinc fingers lie at residues 480-505 (TNCHWEGCAREFDTQEQLVHHINNDH), 513-540 (FVCRWLDCSREQKPFKAQYMLVVHMRRH), 546-570 (HKCTFEGCTKAYSRLENLKTHLRSH), 576-601 (YVCEHEGCNKAFSNASDRAKHQNRTH), and 607-632 (YVCKIPGCTKRYTDPSSLRKHVKTVH). The interval 620-728 (DPSSLRKHVK…PISNYSNSGL (109 aa)) is disordered. Positions 632–648 (HGPEAHVTKKQRGDIHP) are enriched in basic and acidic residues. S664 is modified (phosphoserine). The segment covering 684 to 699 (SKREECLQVKTVKAEK) has biased composition (basic and acidic residues). Positions 703–726 (SQPSPGGQSSCSSQQSPISNYSNS) are enriched in low complexity. The tract at residues 745-845 (DETPIMDSTI…VDVTMLNMLN (101 aa)) is mediates interaction with DZIP1. Residue K773 forms a Glycyl lysine isopeptide (Lys-Gly) (interchain with G-Cter in ubiquitin) linkage. Residue K779 forms a Glycyl lysine isopeptide (Lys-Gly) (interchain with G-Cter in SUMO2); alternate linkage. A Glycyl lysine isopeptide (Lys-Gly) (interchain with G-Cter in ubiquitin); alternate cross-link involves residue K779. Glycyl lysine isopeptide (Lys-Gly) (interchain with G-Cter in ubiquitin) cross-links involve residues K784 and K800. Phosphoserine; by PKA is present on residues S849, S865, S877, and S907. Low complexity predominate over residues 863–882 (RSSGISPCFSSRRSSEASQA). The disordered stretch occupies residues 863 to 918 (RSSGISPCFSSRRSSEASQAEGRPQNVSVADSYDPISTDASRRSSEASQSDGLPSL). Over residues 908–918 (EASQSDGLPSL) the composition is skewed to polar residues. Phosphoserine; by PKA is present on residues S980 and S1006. A disordered region spans residues 981–1042 (DGGAHGYGRR…PAMATSAEKR (62 aa)).

Belongs to the GLI C2H2-type zinc-finger protein family. The full-length GLI3 form (GLI3FL) interacts with SUFU and this interaction regulates the formation of either repressor or activator forms of GLI3. Its association with SUFU is regulated by Hh signaling and dissociation of the SUFU-GLI3 interaction requires the presence of the ciliary motor KIF3A. Interacts with KIF7. The activator form of GLI3 (GLI3A) but not the repressor form (GLI3R) can interact with TRPS1. The phosphorylated form interacts with BTRC. Interacts with ZIC1. Interacts with ZIC3 (via C2H2-type domains 3, 4 and 5); the interaction enhances its transcriptional activity. Interacts with WRD11; the interaction associates EMX1 with GLI3. Interacts with DZIP1; retains GLI3 within the cytoplasm. Phosphorylated on multiple sites by protein kinase A (PKA) and phosphorylation by PKA primes further phosphorylation by CK1 and GSK3. Phosphorylated by DYRK2 (in vitro). Phosphorylation is essential for its proteolytic processing. Post-translationally, transcriptional repressor GLI3R, a C-terminally truncated form, is generated from the full-length GLI3 protein (GLI3FL/GLI3-190) through proteolytic processing. This process requires PKA-primed phosphorylation of GLI3, ubiquitination of GLI3 and the presence of BTRC. GLI3FL is complexed with SUFU in the cytoplasm and is maintained in a neutral state. Without the Hh signal, the SUFU-GLI3 complex is recruited to cilia, leading to the efficient processing of GLI3FL into GLI3R. GLI3R formation leads to its dissociation from SUFU, allowing it to translocate into the nucleus, and repress Hh target genes. When Hh signaling is initiated, SUFU dissociates from GLI3FL and this has two consequences. First, GLI3R production is halted. Second, free GLI3FL translocates to the nucleus, where it is phosphorylated, destabilized, and converted to a transcriptional activator (GLI3A). Phosphorylated in vitro by ULK3.

The protein localises to the nucleus. The protein resides in the cytoplasm. It is found in the cell projection. Its subcellular location is the cilium. In terms of biological role, has a dual function as a transcriptional activator and a repressor of the sonic hedgehog (Shh) pathway, and plays a role in limb development. The full-length GLI3 form (GLI3FL) after phosphorylation and nuclear translocation, acts as an activator (GLI3A) while GLI3R, its C-terminally truncated form, acts as a repressor. A proper balance between the GLI3 activator and the repressor GLI3R, rather than the repressor gradient itself or the activator/repressor ratio gradient, specifies limb digit number and identity. In concert with TRPS1, plays a role in regulating the size of the zone of distal chondrocytes, in restricting the zone of PTHLH expression in distal cells and in activating chondrocyte proliferation. Binds to the minimal GLI-consensus sequence 5'-GGGTGGTC-3'. Plays a role in limb and brain development. The sequence is that of Transcriptional activator GLI3 (GLI3) from Pan troglodytes (Chimpanzee).